Here is a 194-residue protein sequence, read N- to C-terminus: Endonuclease V (194 aa).

2 residues coordinate Mg(2+): D31 and E95.

This sequence belongs to the endonuclease V family. The cofactor is Mg(2+).

The protein resides in the cytoplasm. It carries out the reaction Endonucleolytic cleavage at apurinic or apyrimidinic sites to products with a 5'-phosphate.. In terms of biological role, DNA repair enzyme involved in the repair of deaminated bases. Selectively cleaves double-stranded DNA at the second phosphodiester bond 3' to a deoxyinosine leaving behind the intact lesion on the nicked DNA. This chain is Endonuclease V, found in Pyrococcus abyssi (strain GE5 / Orsay).